Consider the following 391-residue polypeptide: Elongation factor Tu (391 aa).

The tr-type G domain occupies 10 to 201 (KPHVNIGTIG…QVDAYIPTPV (192 aa)). The interval 19–26 (GHVDHGKT) is G1. A GTP-binding site is contributed by 19–26 (GHVDHGKT). A Mg(2+)-binding site is contributed by T26. Residues 55-59 (GITIS) form a G2 region. The interval 76–79 (DCPG) is G3. GTP is bound by residues 76–80 (DCPGH) and 131–134 (NKVD). Positions 131-134 (NKVD) are G4. Residues 169-171 (SAL) form a G5 region.

Belongs to the TRAFAC class translation factor GTPase superfamily. Classic translation factor GTPase family. EF-Tu/EF-1A subfamily. As to quaternary structure, monomer.

It is found in the cytoplasm. It catalyses the reaction GTP + H2O = GDP + phosphate + H(+). Functionally, GTP hydrolase that promotes the GTP-dependent binding of aminoacyl-tRNA to the A-site of ribosomes during protein biosynthesis. This is Elongation factor Tu from Mesorhizobium japonicum (strain LMG 29417 / CECT 9101 / MAFF 303099) (Mesorhizobium loti (strain MAFF 303099)).